We begin with the raw amino-acid sequence, 120 residues long: uncharacterized protein (120 aa).

Residues 90–120 form a disordered region; the sequence is SLASRGGHMTQSGQCHVSGSLLGRGHKSRGR.

This is an uncharacterized protein from Homo sapiens (Human).